The chain runs to 834 residues: Protein Jade-1 (834 aa).

The tract at residues 1–46 (MKRGRLPSSSEDSDDNGSLSTTWSQHSRSQHGRSSTCSRPEDRKPS) is disordered. The span at 24 to 35 (SQHSRSQHGRSS) shows a compositional bias: low complexity. The interval 61–81 (DSYQLNPDDYYVLADPWRQEW) is interaction with KAT7/HBO1 and histones. Positions 81 to 189 (WEKGVQVPVS…EQRCYDNMNH (109 aa)) are interaction with histones. Ser-90 is subject to Phosphoserine. A Phosphothreonine modification is found at Thr-93. A Glycyl lysine isopeptide (Lys-Gly) (interchain with G-Cter in SUMO2) cross-link involves residue Lys-115. The PHD-type 1 zinc finger occupies 204 to 254 (DVVCDVCQSPDGEDGNEMVFCDKCNICVHQACYGILKVPEGSWLCRTCALG). Residues 256–290 (QPKCLLCPKKGGAMKPTRSGTKWVHVSCALWIPEV) form a C2HC pre-PHD-type zinc finger. Residues 314–370 (LVCSLCNEKFGASIQCSVKNCRTAFHVTCAFDRGLEMKTILAENDEVKFKSYCPKHS) form a PHD-type 2 zinc finger. A disordered region spans residues 367–409 (PKHSSHRKPEEGLGEGAAQENGAPESSPQSPLEPYGSLEPNRE). Lys-573 participates in a covalent cross-link: Glycyl lysine isopeptide (Lys-Gly) (interchain with G-Cter in SUMO2). 2 disordered regions span residues 589–621 (HPLK…CGRR) and 676–716 (DKSF…GTRK). A Phosphoserine modification is found at Ser-603. Residue Lys-609 is modified to N6-acetyllysine. Phosphoserine occurs at positions 704 and 735. The interval 738-819 (KSWGGFRIPK…EKKCIHASST (82 aa)) is disordered. Composition is skewed to basic and acidic residues over residues 747-768 (KKGE…HSDC) and 777-790 (PAKE…RADS).

Belongs to the JADE family. In terms of assembly, component of the HBO1 complex composed at least of ING4 or ING5, KAT7/HBO1, MEAF6, and one of JADE1, JADE2 and JADE3. Interacts with NPHP4. Highly expressed in kidney. Also present in liver (at protein level).

The protein localises to the nucleus. It is found in the chromosome. The protein resides in the cytoplasm. It localises to the cytoskeleton. Its subcellular location is the cilium basal body. Functionally, scaffold subunit of some HBO1 complexes, which have a histone H4 acetyltransferase activity. Plays a key role in HBO1 complex by directing KAT7/HBO1 specificity towards histone H4 acetylation (H4K5ac, H4K8ac and H4K12ac), regulating DNA replication initiation, regulating DNA replication initiation. May also promote acetylation of nucleosomal histone H4 by KAT5. Promotes apoptosis. May act as a renal tumor suppressor. Negatively regulates canonical Wnt signaling; at least in part, cooperates with NPHP4 in this function. The chain is Protein Jade-1 (Jade1) from Mus musculus (Mouse).